We begin with the raw amino-acid sequence, 237 residues long: 1-(5-phosphoribosyl)-5-[(5-phosphoribosylamino)methylideneamino] imidazole-4-carboxamide isomerase (237 aa).

Aspartate 8 functions as the Proton acceptor in the catalytic mechanism. Catalysis depends on aspartate 129, which acts as the Proton donor.

This sequence belongs to the HisA/HisF family.

It localises to the cytoplasm. The enzyme catalyses 1-(5-phospho-beta-D-ribosyl)-5-[(5-phospho-beta-D-ribosylamino)methylideneamino]imidazole-4-carboxamide = 5-[(5-phospho-1-deoxy-D-ribulos-1-ylimino)methylamino]-1-(5-phospho-beta-D-ribosyl)imidazole-4-carboxamide. The protein operates within amino-acid biosynthesis; L-histidine biosynthesis; L-histidine from 5-phospho-alpha-D-ribose 1-diphosphate: step 4/9. The protein is 1-(5-phosphoribosyl)-5-[(5-phosphoribosylamino)methylideneamino] imidazole-4-carboxamide isomerase of Acetivibrio thermocellus (strain ATCC 27405 / DSM 1237 / JCM 9322 / NBRC 103400 / NCIMB 10682 / NRRL B-4536 / VPI 7372) (Clostridium thermocellum).